The following is a 184-amino-acid chain: Putative manganese efflux pump MntP (184 aa).

The next 6 helical transmembrane spans lie at Ser12–Ile32, Ile39–Leu59, Leu63–Leu83, Phe99–Phe119, Val132–Leu152, and Tyr164–Leu184.

Belongs to the MntP (TC 9.B.29) family.

It localises to the cell membrane. Its function is as follows. Probably functions as a manganese efflux pump. The polypeptide is Putative manganese efflux pump MntP (Bacillus pumilus (strain SAFR-032)).